Here is a 425-residue protein sequence, read N- to C-terminus: Mothers against decapentaplegic homolog 3 (425 aa).

At serine 2 the chain carries N-acetylserine. Position 8 is a phosphothreonine; by CDK2 and CDK4 (threonine 8). In terms of domain architecture, MH1 spans 10-136; that stretch reads PIVKRLLGWK…YQRVETPVLP (127 aa). A Glycyl lysine isopeptide (Lys-Gly) (interchain with G-Cter in ubiquitin) cross-link involves residue lysine 33. Cysteine 64 contributes to the Zn(2+) binding site. Lysine 81 participates in a covalent cross-link: Glycyl lysine isopeptide (Lys-Gly) (interchain with G-Cter in ubiquitin). Zn(2+) is bound by residues cysteine 109, cysteine 121, and histidine 126. The interval 137–231 is linker; it reads PVLVPRHTEI…QPVTYCEPAF (95 aa). Positions 165–177 are enriched in polar residues; sequence NFPAGIEPQSNIP. A disordered region spans residues 165–208; it reads NFPAGIEPQSNIPETPPPGYLSEDGETSDHQMNHSMDAGSPNLS. At threonine 179 the chain carries Phosphothreonine; by CDK2, CDK4 and MAPK. Position 204 is a phosphoserine; by GSK3 and MAPK (serine 204). Residue serine 208 is modified to Phosphoserine; by MAPK. The residue at position 213 (serine 213) is a Phosphoserine; by CDK2 and CDK4. The region spanning 232–425 is the MH2 domain; it reads WCSISYYELN…SPSIRCSSVS (194 aa). The interval 271 to 324 is sufficient for interaction with XPO4; the sequence is LGLLSNVNRNAAVELTRRHIGRGVRLYYIGGEVFAECLSDSAIFVQSPNCNQRY. Position 378 is an N6-acetyllysine (lysine 378). Serine 416 is subject to Phosphoserine. At serine 418 the chain carries Phosphoserine; by CK1. Residues serine 422, serine 423, and serine 425 each carry the phosphoserine; by TGFBR1 modification.

The protein belongs to the dwarfin/SMAD family. As to quaternary structure, monomer; in the absence of TGF-beta. Homooligomer; in the presence of TGF-beta. Heterotrimer; forms a heterotrimer in the presence of TGF-beta consisting of two molecules of C-terminally phosphorylated SMAD2 or SMAD3 and one of SMAD4 to form the transcriptionally active SMAD2/SMAD3-SMAD4 complex. Part of a complex consisting of MAGI2/ARIP1, ACVR2A, ACVR1B and SMAD3. Forms a complex with SMAD2 and TRIM33 upon addition of TGF-beta. Found in a complex composed of SMAD3, RAN and XPO4; within the complex interacts directly with XPO4. Component of the multimeric complex SMAD3/SMAD4/JUN/FOS which forms at the AP1 promoter site; required for synergistic transcriptional activity in response to TGF-beta. Part of a ternary complex composed of SMAD3, ITCH/AIP4 and NEDD9/HEF1; within the complex NEDD9/HEF1 interacts (via N-terminus) with ITCH/AIP4; the complex mediates ubiquitination and proteasomal degradation of NEDD9/HEF1. Interacts with NEDD9; the interaction promotes NEDD9 ubiquitination and proteasomal degradation. Interacts (via an N-terminal domain) with JUN (via its basic DNA binding and leucine zipper domains); this interaction is essential for DNA binding and cooperative transcriptional activity in response to TGF-beta. Identified in a complex that contains at least ZNF451, SMAD2, SMAD3 and SMAD4. Interacts with PPM1A; the interaction dephosphorylates SMAD3 in the C-terminal SXS motif leading to disruption of the SMAD2/3-SMAD4 complex, nuclear export and termination of TGF-beta signaling. Interacts (via MH2 domain) with ZMIZ1 (via SP-RING-type domain); in the TGF-beta signaling pathway increases the activity of the SMAD3/SMAD4 transcriptional complex. Interacts (when phosphorylated) with RNF111; RNF111 acts as an enhancer of the transcriptional responses by mediating ubiquitination and degradation of SMAD3 inhibitors. Interacts (dephosphorylated form via the MH1 and MH2 domains) with RANBP3 (via its C-terminal R domain); the interaction results in the export of dephosphorylated SMAD3 out of the nucleus and termination of the TGF-beta signaling. Interacts (via MH2 domain) with LEMD3; the interaction represses SMAD3 transcriptional activity through preventing the formation of the heteromeric complex with SMAD4 and translocation to the nucleus. Interacts (via the linker region) with EP300 (C-terminal); the interaction promotes SMAD3 acetylation and is enhanced by TGF-beta phosphorylation in the C-terminal of SMAD3. This interaction can be blocked by competitive binding of adenovirus oncoprotein E1A to the same C-terminal site on EP300, which then results in partially inhibited SMAD3/SMAD4 transcriptional activity. Interacts with TGFBR1. Interacts with TGFB1I1. Interacts with PRDM16. Interacts with SNW1. Interacts (via MH2 domain) with ZFYVE9. Interacts with HDAC1. Interacts with TGIF2. Interacts with SKOR1. Interacts with SKOR2. Interacts with DACH1; the interaction inhibits the TGF-beta signaling. Interacts with RBPMS. Interacts (via MH2 domain) with MECOM. Interacts with WWTR1 (via its coiled-coil domain). Interacts with SKI; the interaction represses SMAD3 transcriptional activity. Interacts with MEN1. Interacts with IL1F7. Interaction with CSNK1G2. Interacts with PDPK1 (via PH domain). Interacts with DAB2; the interactions are enhanced upon TGF-beta stimulation. Interacts with USP15. Interacts with PPP5C; the interaction decreases SMAD3 phosphorylation and protein levels. Interacts with LDLRAD4 (via the SMAD interaction motif). Interacts with PMEPA1. Interacts with ZNF451. Interacts with ZFHX3. Interacts weakly with ZNF8. Interacts with STUB1, HSPA1A, HSPA1B, HSP90AA1 and HSP90AB1. Interacts with YAP1 (when phosphorylated at 'Ser-55'). Interacts with MAGI2/ARIP1. Interacts (via MH2 domain) with CITED2 (via C-terminus). Interacts with HGS. Interacts with WWP1. Interacts with TTRAP. Interacts with FOXL2. Interacts with PML. Interacts with NEDD4L; the interaction requires TGF-beta stimulation. Interacts with ZC3H3. Interacts with TGIF. Interacts with CREBBP. Interacts with ATF2. Interacts with NEDD9; the interaction is inhibited by oxidation of NEDD9. Interacts with MTMR4; negatively regulates TGF-beta signaling through SMAD3 dephosphorylation and retention in endosomes. Post-translationally, phosphorylated on serine and threonine residues. Enhanced phosphorylation in the linker region on Thr-179, Ser-204 and Ser-208 on EGF and TGF-beta treatment. Ser-208 is the main site of MAPK-mediated phosphorylation. CDK-mediated phosphorylation occurs in a cell-cycle dependent manner and inhibits both the transcriptional activity and antiproliferative functions of SMAD3. This phosphorylation is inhibited by flavopiridol. Maximum phosphorylation at the G(1)/S junction. Also phosphorylated on serine residues in the C-terminal SXS motif by TGFBR1 and ACVR1. TGFBR1-mediated phosphorylation at these C-terminal sites is required for interaction with SMAD4, nuclear location and transactivational activity, and appears to be a prerequisite for the TGF-beta mediated phosphorylation in the linker region. Dephosphorylated in the C-terminal SXS motif by PPM1A. This dephosphorylation disrupts the interaction with SMAD4, promotes nuclear export and terminates TGF-beta-mediated signaling. Phosphorylation at Ser-418 by CSNK1G2/CK1 promotes ligand-dependent ubiquitination and subsequent proteasome degradation, thus inhibiting SMAD3-mediated TGF-beta responses. Phosphorylated by PDPK1. Acetylation in the nucleus by EP300 in the MH2 domain regulates positively its transcriptional activity and is enhanced by TGF-beta. In terms of processing, poly-ADP-ribosylated by PARP1 and PARP2. ADP-ribosylation negatively regulates SMAD3 transcriptional responses during the course of TGF-beta signaling. Post-translationally, ubiquitinated. Monoubiquitinated, leading to prevent DNA-binding. Deubiquitination by USP15 alleviates inhibition and promotes activation of TGF-beta target genes. Ubiquitinated by RNF111, leading to its degradation: only SMAD3 proteins that are 'in use' are targeted by RNF111, RNF111 playing a key role in activating SMAD3 and regulating its turnover. Undergoes STUB1-mediated ubiquitination and degradation. In terms of tissue distribution, highly expressed in the brain and ovary. Detected in the pyramidal cells of the hippocampus, granule cells of the dentate gyrus, granular cells of the cerebral cortex and the granulosa cells of the ovary.

It localises to the cytoplasm. Its subcellular location is the nucleus. In terms of biological role, receptor-regulated SMAD (R-SMAD) that is an intracellular signal transducer and transcriptional modulator activated by TGF-beta (transforming growth factor) and activin type 1 receptor kinases. Binds the TRE element in the promoter region of many genes that are regulated by TGF-beta and, on formation of the SMAD3/SMAD4 complex, activates transcription. Also can form a SMAD3/SMAD4/JUN/FOS complex at the AP-1/SMAD site to regulate TGF-beta-mediated transcription. Has an inhibitory effect on wound healing probably by modulating both growth and migration of primary keratinocytes and by altering the TGF-mediated chemotaxis of monocytes. This effect on wound healing appears to be hormone-sensitive. Regulator of chondrogenesis and osteogenesis and inhibits early healing of bone fractures. Positively regulates PDPK1 kinase activity by stimulating its dissociation from the 14-3-3 protein YWHAQ which acts as a negative regulator. This is Mothers against decapentaplegic homolog 3 (SMAD3) from Sus scrofa (Pig).